The following is a 207-amino-acid chain: Anthranilate synthase component II (207 aa).

Residues 17–207 (RVLFVDNFDS…DVIRNFLAGL (191 aa)) form the Glutamine amidotransferase type-1 domain. 66–68 (GPG) contributes to the L-glutamine binding site. Residue cysteine 96 is the Nucleophile; for GATase activity of the active site. L-glutamine is bound at residue 146-147 (SL). Residues histidine 187 and glutamate 189 contribute to the active site.

Tetramer of two components I and two components II.

It catalyses the reaction chorismate + L-glutamine = anthranilate + pyruvate + L-glutamate + H(+). It functions in the pathway amino-acid biosynthesis; L-tryptophan biosynthesis; L-tryptophan from chorismate: step 1/5. This chain is Anthranilate synthase component II (trpG1), found in Haloarcula marismortui (strain ATCC 43049 / DSM 3752 / JCM 8966 / VKM B-1809) (Halobacterium marismortui).